A 70-amino-acid chain; its full sequence is uncharacterized protein (70 aa).

This is an uncharacterized protein from Homo sapiens (Human).